The chain runs to 207 residues: Histidine biosynthesis bifunctional protein HisIE (207 aa).

The segment at 1-117 is phosphoribosyl-AMP cyclohydrolase; sequence MSLVTTINWE…GKQEQPALVF (117 aa). A phosphoribosyl-ATP pyrophosphohydrolase region spans residues 118-207; sequence LHQLEQVLAN…TEKLQERHNK (90 aa).

It in the N-terminal section; belongs to the PRA-CH family. The protein in the C-terminal section; belongs to the PRA-PH family.

It is found in the cytoplasm. The catalysed reaction is 1-(5-phospho-beta-D-ribosyl)-ATP + H2O = 1-(5-phospho-beta-D-ribosyl)-5'-AMP + diphosphate + H(+). It carries out the reaction 1-(5-phospho-beta-D-ribosyl)-5'-AMP + H2O = 1-(5-phospho-beta-D-ribosyl)-5-[(5-phospho-beta-D-ribosylamino)methylideneamino]imidazole-4-carboxamide. It participates in amino-acid biosynthesis; L-histidine biosynthesis; L-histidine from 5-phospho-alpha-D-ribose 1-diphosphate: step 2/9. Its pathway is amino-acid biosynthesis; L-histidine biosynthesis; L-histidine from 5-phospho-alpha-D-ribose 1-diphosphate: step 3/9. The sequence is that of Histidine biosynthesis bifunctional protein HisIE from Photobacterium profundum (strain SS9).